A 101-amino-acid polypeptide reads, in one-letter code: NADH-quinone oxidoreductase subunit K (101 aa).

The next 3 membrane-spanning stretches (helical) occupy residues 4 to 24 (LGHMLALGAVLFAISLAGIFL), 30 to 50 (IVLLMSIELMLLSVNINFVGF), and 62 to 82 (FVFFILTVAAAEAAIGLAILV).

The protein belongs to the complex I subunit 4L family. As to quaternary structure, NDH-1 is composed of 14 different subunits. Subunits NuoA, H, J, K, L, M, N constitute the membrane sector of the complex.

The protein resides in the cell inner membrane. The enzyme catalyses a quinone + NADH + 5 H(+)(in) = a quinol + NAD(+) + 4 H(+)(out). In terms of biological role, NDH-1 shuttles electrons from NADH, via FMN and iron-sulfur (Fe-S) centers, to quinones in the respiratory chain. The immediate electron acceptor for the enzyme in this species is believed to be ubiquinone. Couples the redox reaction to proton translocation (for every two electrons transferred, four hydrogen ions are translocated across the cytoplasmic membrane), and thus conserves the redox energy in a proton gradient. The polypeptide is NADH-quinone oxidoreductase subunit K (Stenotrophomonas maltophilia (strain K279a)).